Consider the following 327-residue polypeptide: Deoxynucleotidyltransferase terminal-interacting protein 1 (327 aa).

Gly residues predominate over residues Met-1–Arg-11. Disordered regions lie at residues Met-1–Thr-34 and Lys-146–His-172. The important for dimerization stretch occupies residues Met-55–Lys-146. Residues Lys-146 to Phe-161 are compositionally biased toward basic and acidic residues. A DNA-binding region (a.T hook) is located at residues Arg-157–Gly-171. The Nuclear localization signal signature appears at Pro-162 to Gly-168. The interval Arg-195–Thr-314 is important for DNA and nucleosome binding. The H-T-H motif DNA-binding region spans Gly-214–Pro-235.

As to quaternary structure, monomer and homodimer. A minor proportion may form homotrimers. Interacts with ZNF541. Interacts with the terminal deoxynucleotidyltransferase DNTT. Interacts with TRERF1. Identified in a histone deacetylase complex that contains DNTTIP1, HDAC1 and MIDEAS; this complex assembles into a tetramer that contains four copies of each protein chain. Component of a histone deacetylase complex containing DNTTIP1, ZNF541, HDAC1 and HDAC2. Identified in a complex with KCTD19, HDAC1, HDAC2 and ZNF541. In terms of tissue distribution, expressed in thymus, bone marrow and spleen.

Its subcellular location is the nucleus. In terms of biological role, increases DNTT terminal deoxynucleotidyltransferase activity (in vitro). Also acts as a transcriptional regulator, binding to the consensus sequence 5'-GNTGCATG-3' following an AT-tract. Associates with RAB20 promoter and positively regulates its transcription. Binds DNA and nucleosomes; may recruit HDAC1 complexes to nucleosomes or naked DNA. The chain is Deoxynucleotidyltransferase terminal-interacting protein 1 (Dnttip1) from Rattus norvegicus (Rat).